Consider the following 115-residue polypeptide: Putative UPF0377 protein YHL045W (115 aa).

A helical membrane pass occupies residues 10 to 30 (ACIFIDSVCEGIVFWGLCLFV).

The protein belongs to the UPF0377 family.

Its subcellular location is the membrane. The chain is Putative UPF0377 protein YHL045W from Saccharomyces cerevisiae (strain ATCC 204508 / S288c) (Baker's yeast).